The sequence spans 90 residues: Repetitive proline-rich cell wall protein 3 (90 aa).

An N-terminal signal peptide occupies residues 1–24 (MASFVSFLVLLLAALILMPQGLAT). The segment covering 46–65 (KPPVYKPKPPVYKPKPPVYK) has biased composition (pro residues). Residues 46-90 (KPPVYKPKPPVYKPKPPVYKPPYKKPPYKKPPYGKYPPVEDNTHA) are disordered.

This sequence belongs to the plant proline-rich protein superfamily. ENOD12 family.

It is found in the secreted. The protein resides in the cell wall. This is Repetitive proline-rich cell wall protein 3 (PRP3) from Glycine max (Soybean).